Here is a 545-residue protein sequence, read N- to C-terminus: Glucans biosynthesis protein G (545 aa).

An N-terminal signal peptide occupies residues 1–34 (MVSLLRCQSFKPSSSLICSLALSAAFALSSSAFA). Positions 38–60 (KPAENKPATPVVSPPKATAQPAN) are disordered.

This sequence belongs to the OpgD/OpgG family.

It localises to the periplasm. It participates in glycan metabolism; osmoregulated periplasmic glucan (OPG) biosynthesis. Involved in the biosynthesis of osmoregulated periplasmic glucans (OPGs). This Shewanella sp. (strain MR-7) protein is Glucans biosynthesis protein G.